Consider the following 383-residue polypeptide: Small ribosomal subunit protein mS31 (383 aa).

Residues M1–L21 constitute a mitochondrion transit peptide. Positions V158–E187 form a coiled coil.

Belongs to the mitochondrion-specific ribosomal protein mS31 family. As to quaternary structure, component of the mitochondrial ribosome small subunit (28S) which comprises a 12S rRNA and about 30 distinct proteins.

It is found in the mitochondrion. The sequence is that of Small ribosomal subunit protein mS31 (mrps-31) from Caenorhabditis elegans.